A 425-amino-acid polypeptide reads, in one-letter code: Lipoyl synthase, mitochondrial (425 aa).

A mitochondrion-targeting transit peptide spans 1-33; that stretch reads MAASSTRLRCLYASSSTWKTSPSQSLISLSRRY. The interval 17–55 is disordered; the sequence is TWKTSPSQSLISLSRRYATTSSAPPTPSDESSSTLPKRR. Residues 33 to 51 are compositionally biased toward polar residues; that stretch reads YATTSSAPPTPSDESSSTL. [4Fe-4S] cluster-binding residues include Cys142, Cys147, Cys153, Cys173, Cys177, Cys180, and Ser388. Positions 156–377 constitute a Radical SAM core domain; the sequence is GSDKSAATAT…RQRALEMGFL (222 aa).

It belongs to the radical SAM superfamily. Lipoyl synthase family. [4Fe-4S] cluster is required as a cofactor.

The protein resides in the mitochondrion. It carries out the reaction [[Fe-S] cluster scaffold protein carrying a second [4Fe-4S](2+) cluster] + N(6)-octanoyl-L-lysyl-[protein] + 2 oxidized [2Fe-2S]-[ferredoxin] + 2 S-adenosyl-L-methionine + 4 H(+) = [[Fe-S] cluster scaffold protein] + N(6)-[(R)-dihydrolipoyl]-L-lysyl-[protein] + 4 Fe(3+) + 2 hydrogen sulfide + 2 5'-deoxyadenosine + 2 L-methionine + 2 reduced [2Fe-2S]-[ferredoxin]. Its pathway is protein modification; protein lipoylation via endogenous pathway; protein N(6)-(lipoyl)lysine from octanoyl-[acyl-carrier-protein]: step 2/2. Catalyzes the radical-mediated insertion of two sulfur atoms into the C-6 and C-8 positions of the octanoyl moiety bound to the lipoyl domains of lipoate-dependent enzymes, thereby converting the octanoylated domains into lipoylated derivatives. This Talaromyces marneffei (strain ATCC 18224 / CBS 334.59 / QM 7333) (Penicillium marneffei) protein is Lipoyl synthase, mitochondrial.